The primary structure comprises 147 residues: Plasminogen receptor (KT) (147 aa).

At 1 to 52 the chain is on the extracellular side; the sequence is MGFIFSKSMNENMKNQQEFMVMHARLQLERQLIMQNEMRERQMAMQIAWSRE. Residues 53 to 73 traverse the membrane as a helical segment; that stretch reads FLKYFGTFFGIATISLAAGAI. Residues 74 to 78 are Cytoplasmic-facing; sequence KRKKP. Residues 79–99 form a helical membrane-spanning segment; sequence AFLIPIVPLSFIFTYQYDLGY. The Extracellular portion of the chain corresponds to 100-147; it reads GTLLQRMKSEAEDILETEKTKLELPKGLITFESLEKARREQSKFFSDK.

As to quaternary structure, interacts with PLAT. Interacts with PLAUR. In terms of tissue distribution, expressed in adrenal medulla (pheochromocytoma).

The protein localises to the cell membrane. Functionally, receptor for plasminogen. Regulates urokinase plasminogen activator-dependent and stimulates tissue-type plasminogen activator-dependent cell surface plasminogen activation. Proposed to be part of a local catecholaminergic cell plasminogen activation system that regulates neuroendocrine prohormone processing. Involved in regulation of inflammatory response; regulates monocyte chemotactic migration and matrix metalloproteinase activation, such as of MMP2 and MMP9. The sequence is that of Plasminogen receptor (KT) (Plgrkt) from Rattus norvegicus (Rat).